The following is a 268-amino-acid chain: MKKALLALFMVVSIAALAACGAGNDNQSKDNAKDGDLWASIKKKGVLTVGTEGTYEPFTYHDKDTDKLTGYDVEVITEVAKRLGLKVDFKETQWDSMFAGLNSKRFDVVANQVGKTDREDKYDFSDKYTTSRAVVVTKKDNNDIKSEADVKGKTSAQSLTSNYNKLATNAGAKVEGVEGMAQALQMIQQGRVDMTYNDKLAVLNYLKTSGNKNVKIAFETGEPQSTYFTFRKGSGEVVDQVNKALKEMKEDGTLSKISKKWFGEDVSK.

The N-terminal stretch at 1–19 is a signal peptide; that stretch reads MKKALLALFMVVSIAALAA. The N-palmitoyl cysteine moiety is linked to residue cysteine 20. Cysteine 20 carries S-diacylglycerol cysteine lipidation.

The protein belongs to the bacterial solute-binding protein 3 family. As to quaternary structure, the complex is composed of two ATP-binding proteins (TcyC), two transmembrane proteins (TcyB) and a solute-binding protein (TcyA).

Its subcellular location is the cell membrane. Functionally, part of the ABC transporter complex TcyABC involved in L-cystine import. The sequence is that of L-cystine-binding protein TcyA (tcyA) from Bacillus subtilis (strain 168).